A 199-amino-acid polypeptide reads, in one-letter code: MAQLFFRYGAMSSGKTIEILKVAHNYEAQGRKIALMTSGLDNRSGVGTVASRIGIHRKAIPITEEMDLFEYIKEMNNHDLADGDGKLACVLIDEAQFLKRHHVLECAKIVDEFNIPVMTFGLKNDFQNHLFEGSENLLIFADKIEEMKTICHYCGHKATMNLRINNGKPVYEGEQVQIGGDESYYPVCRYHYFHPNVVR.

ATP-binding positions include 9-16 (GAMSSGKT) and 93-96 (DEAQ). Catalysis depends on Glu-94, which acts as the Proton acceptor. Zn(2+) is bound by residues Cys-151, Cys-154, Cys-188, and His-191.

It belongs to the thymidine kinase family. As to quaternary structure, homotetramer.

The protein localises to the cytoplasm. It carries out the reaction thymidine + ATP = dTMP + ADP + H(+). This chain is Thymidine kinase, found in Lactobacillus acidophilus (strain ATCC 700396 / NCK56 / N2 / NCFM).